Here is a 197-residue protein sequence, read N- to C-terminus: MTSRPLILGSSSIWRKQVLIDMGYIFKTMSPDIDEKAIRDSDPKTLTLLISRAKAQALLKRIKESDDELDKKSIMICSDQVIVHNGVIREKPETEQQCREYLQSYEFHPAVAVVSVVVVNIETGKIVEGTDIATQHFKKISDEFIDKLIKQGDVMHCAGGFTVEHMADFTLQLEGEVETILGLPKTLTKNLISQVSQ.

The active-site Proton acceptor is the Asp79.

This sequence belongs to the Maf family. YceF subfamily.

The protein localises to the cytoplasm. It catalyses the reaction N(7)-methyl-GTP + H2O = N(7)-methyl-GMP + diphosphate + H(+). Nucleoside triphosphate pyrophosphatase that hydrolyzes 7-methyl-GTP (m(7)GTP). May have a dual role in cell division arrest and in preventing the incorporation of modified nucleotides into cellular nucleic acids. This is 7-methyl-GTP pyrophosphatase from Dictyostelium discoideum (Social amoeba).